A 386-amino-acid polypeptide reads, in one-letter code: MKHVFPTYKRFPIDLVNGTGTVVTDKNGKTYLDFTSGIAVCNLGHCPTNVAEAVQQQLGNIWHTSNLYECALQDSVAELIADGKERLVFFCNSGTESNEAALKLARKYTGKEKIITFEKSFHGRTFGSMSATGQAKIHQGFGELVPGFTYVPYNDIEAFRAEIDENTAAVMLEVIQAEGGVIPANAAFLLEVQLLCKKMGALLIIDEVQTGLGRTGTLYGFEQIGLDPDIFTLAKGLGNGLPIGAMVGKSDLISAFGPGSHGSTFGGNKLALAAAKEILLTMKQTGFLEEVNAKADYFRNLLEANLEVLDNVSDIRGGGFLIGIELENAAEPVITELRDKGLLILTAGTNVLRILPPLTVSYAEIDQAIYLLKSVLENQLIGSEEG.

Pyridoxal 5'-phosphate-binding positions include 94-95 (GT) and Phe121. Arg124 provides a ligand contact to N(2)-acetyl-L-ornithine. 206–209 (DEVQ) contributes to the pyridoxal 5'-phosphate binding site. The residue at position 235 (Lys235) is an N6-(pyridoxal phosphate)lysine. A N(2)-acetyl-L-ornithine-binding site is contributed by Ser263. Thr264 is a pyridoxal 5'-phosphate binding site.

Belongs to the class-III pyridoxal-phosphate-dependent aminotransferase family. ArgD subfamily. Homodimer. Pyridoxal 5'-phosphate is required as a cofactor.

It is found in the cytoplasm. It catalyses the reaction N(2)-acetyl-L-ornithine + 2-oxoglutarate = N-acetyl-L-glutamate 5-semialdehyde + L-glutamate. The protein operates within amino-acid biosynthesis; L-arginine biosynthesis; N(2)-acetyl-L-ornithine from L-glutamate: step 4/4. The polypeptide is Acetylornithine aminotransferase (Listeria monocytogenes serovar 1/2a (strain ATCC BAA-679 / EGD-e)).